The primary structure comprises 156 residues: Ribosomal RNA large subunit methyltransferase H (156 aa).

S-adenosyl-L-methionine contacts are provided by residues L73, G104, and 123-128; that span reads LSSLTL.

The protein belongs to the RNA methyltransferase RlmH family. In terms of assembly, homodimer.

It localises to the cytoplasm. It catalyses the reaction pseudouridine(1915) in 23S rRNA + S-adenosyl-L-methionine = N(3)-methylpseudouridine(1915) in 23S rRNA + S-adenosyl-L-homocysteine + H(+). Functionally, specifically methylates the pseudouridine at position 1915 (m3Psi1915) in 23S rRNA. The polypeptide is Ribosomal RNA large subunit methyltransferase H (Ralstonia nicotianae (strain ATCC BAA-1114 / GMI1000) (Ralstonia solanacearum)).